A 124-amino-acid polypeptide reads, in one-letter code: Ubiquitin-related modifier 1 (124 aa).

Positions 34–53 (IPSLVPKDNTTSAKNPPPKD) are disordered. Gly124 carries the 1-thioglycine modification. Gly124 is covalently cross-linked (Glycyl lysine isopeptide (Gly-Lys) (interchain with K-? in acceptor proteins)).

Belongs to the URM1 family. In terms of processing, C-terminal thiocarboxylation occurs in 2 steps, it is first acyl-adenylated (-COAMP) via the hesA/moeB/thiF part of UBA4, then thiocarboxylated (-COSH) via the rhodanese domain of UBA4.

It is found in the cytoplasm. The protein operates within tRNA modification; 5-methoxycarbonylmethyl-2-thiouridine-tRNA biosynthesis. Its function is as follows. Acts as a sulfur carrier required for 2-thiolation of mcm(5)S(2)U at tRNA wobble positions of cytosolic tRNA(Lys), tRNA(Glu) and tRNA(Gln). Serves as sulfur donor in tRNA 2-thiolation reaction by being thiocarboxylated (-COSH) at its C-terminus by the MOCS3 homolog UBA4. The sulfur is then transferred to tRNA to form 2-thiolation of mcm(5)S(2)U. Prior mcm(5) tRNA modification by the elongator complex is required for 2-thiolation. Also acts as a ubiquitin-like protein (UBL) that is covalently conjugated via an isopeptide bond to lysine residues of target proteins such as AHP1. The thiocarboxylated form serves as substrate for conjugation and oxidative stress specifically induces the formation of UBL-protein conjugates. This is Ubiquitin-related modifier 1 from Coprinopsis cinerea (strain Okayama-7 / 130 / ATCC MYA-4618 / FGSC 9003) (Inky cap fungus).